Reading from the N-terminus, the 444-residue chain is Tubulin beta chain (444 aa).

The short motif at 1–4 (MREI) is the MREI motif element. Positions 11, 69, 138, 142, 143, 144, 204, and 226 each coordinate GTP. Glutamate 69 lines the Mg(2+) pocket. The tract at residues 421–444 (EYQQYQDATAEEEEDFNEEAEEEA) is disordered. Positions 429–444 (TAEEEEDFNEEAEEEA) are enriched in acidic residues. Glutamate 438 is subject to 5-glutamyl polyglutamate.

It belongs to the tubulin family. Dimer of alpha and beta chains. A typical microtubule is a hollow water-filled tube with an outer diameter of 25 nm and an inner diameter of 15 nM. Alpha-beta heterodimers associate head-to-tail to form protofilaments running lengthwise along the microtubule wall with the beta-tubulin subunit facing the microtubule plus end conferring a structural polarity. Microtubules usually have 13 protofilaments but different protofilament numbers can be found in some organisms and specialized cells. Requires Mg(2+) as cofactor. Post-translationally, some glutamate residues at the C-terminus are polyglycylated, resulting in polyglycine chains on the gamma-carboxyl group. Glycylation is mainly limited to tubulin incorporated into axonemes (cilia and flagella) whereas glutamylation is prevalent in neuronal cells, centrioles, axonemes, and the mitotic spindle. Both modifications can coexist on the same protein on adjacent residues, and lowering polyglycylation levels increases polyglutamylation, and reciprocally. The precise function of polyglycylation is still unclear. In terms of processing, some glutamate residues at the C-terminus are polyglutamylated, resulting in polyglutamate chains on the gamma-carboxyl group. Polyglutamylation plays a key role in microtubule severing by spastin (SPAST). SPAST preferentially recognizes and acts on microtubules decorated with short polyglutamate tails: severing activity by SPAST increases as the number of glutamates per tubulin rises from one to eight, but decreases beyond this glutamylation threshold.

The protein localises to the cytoplasm. Its subcellular location is the cytoskeleton. Functionally, tubulin is the major constituent of microtubules, a cylinder consisting of laterally associated linear protofilaments composed of alpha- and beta-tubulin heterodimers. Microtubules grow by the addition of GTP-tubulin dimers to the microtubule end, where a stabilizing cap forms. Below the cap, tubulin dimers are in GDP-bound state, owing to GTPase activity of alpha-tubulin. The protein is Tubulin beta chain (tubb) of Xenopus laevis (African clawed frog).